Reading from the N-terminus, the 314-residue chain is Olfactory receptor 5P62 (314 aa).

Over 1–28 the chain is Extracellular; the sequence is MAFIYNGSQTTVTEFILLGLTDDPVLKV. N6 carries an N-linked (GlcNAc...) asparagine glycan. The chain crosses the membrane as a helical span at residues 29-49; sequence ILFCIILCIYLVTVFGNLSTI. Topologically, residues 50-57 are cytoplasmic; it reads LLIGVSSK. Residues 58–78 form a helical membrane-spanning segment; that stretch reads LHHPMYFFLSHLASVDMGLSS. Residues 79-102 lie on the Extracellular side of the membrane; the sequence is SVTPNMLVNFLTEKNTISYLGCGI. Residues C100 and C192 are joined by a disulfide bond. The helical transmembrane segment at 103–123 threads the bilayer; sequence QLSSAAFFGAVEFFLLAAMAY. At 124-136 the chain is on the cytoplasmic side; sequence DRLVAICNPLLYS. The chain crosses the membrane as a helical span at residues 137–157; the sequence is TKMSSQVCIQLVAGSYVGGFL. Topologically, residues 158 to 199 are extracellular; sequence NASFVTHFFFSFLFCGPNRVNHFFCDLSPMMELSCSDVSISE. Residues 200 to 220 traverse the membrane as a helical segment; the sequence is IVISFSAGSFTMTTLFVIVIP. Residues 221–240 are Cytoplasmic-facing; it reads YFYIFITILKIRSTEGRQKA. A helical membrane pass occupies residues 241–261; the sequence is FSTCTSHLTAVTLYYGTIIFI. Over 262 to 274 the chain is Extracellular; sequence YVMPKSTYSRDQN. The chain crosses the membrane as a helical span at residues 275-295; the sequence is KVVSLFYMLVIPVLNPLIYSL. At 296-314 the chain is on the cytoplasmic side; it reads RNNEIKDALKRQFYRKTLL.

The protein belongs to the G-protein coupled receptor 1 family.

It is found in the cell membrane. Its function is as follows. Potential odorant receptor. This chain is Olfactory receptor 5P62, found in Mus musculus (Mouse).